The following is a 250-amino-acid chain: Ribonuclease HII (250 aa).

The region spanning 66-250 (ELVAGVDEVG…TFAPVSDFFK (185 aa)) is the RNase H type-2 domain. A divalent metal cation-binding residues include Asp72, Glu73, and Asp164.

The protein belongs to the RNase HII family. Mn(2+) is required as a cofactor. The cofactor is Mg(2+).

It localises to the cytoplasm. It catalyses the reaction Endonucleolytic cleavage to 5'-phosphomonoester.. In terms of biological role, endonuclease that specifically degrades the RNA of RNA-DNA hybrids. The chain is Ribonuclease HII from Lactobacillus helveticus (strain DPC 4571).